The following is a 243-amino-acid chain: Small ribosomal subunit protein uS3 (243 aa).

Position 2 is an N-acetylalanine (alanine 2). A Phosphoserine; by PKC/PRKCD modification is found at serine 6. The KH type-2 domain occupies 21 to 92 (LNEFLTRELA…SVELYAEKVA (72 aa)). Phosphoserine is present on serine 35. At threonine 42 the chain carries Phosphothreonine; by MAPK. Residue lysine 62 is modified to N6-acetyllysine. Arginine 64, arginine 65, and arginine 67 each carry asymmetric dimethylarginine; by PRMT1. A Phosphothreonine; by PKB modification is found at threonine 70. Residue lysine 90 forms a Glycyl lysine isopeptide (Lys-Gly) (interchain with G-Cter in ubiquitin) linkage. The residue at position 104 (serine 104) is a Phosphoserine. Lysine 132 bears the N6-succinyllysine mark. Lysine 202 is covalently cross-linked (Glycyl lysine isopeptide (Lys-Gly) (interchain with G-Cter in ubiquitin)). Residue serine 209 is modified to Phosphoserine; by IKKB. Residue lysine 214 forms a Glycyl lysine isopeptide (Lys-Gly) (interchain with G-Cter in SUMO2); alternate linkage. A Glycyl lysine isopeptide (Lys-Gly) (interchain with G-Cter in ubiquitin); alternate cross-link involves residue lysine 214. Residues 214 to 243 (KDEILPTTPISEQKGGKPEPPAMPQPVPTA) are disordered. Threonine 220 bears the Phosphothreonine mark. Residue threonine 221 is modified to Phosphothreonine; by CDK1 and PKC/PRKCD. Residue serine 224 is modified to Phosphoserine. A Glycyl lysine isopeptide (Lys-Gly) (interchain with G-Cter in SUMO2) cross-link involves residue lysine 230. Residues 231–243 (PEPPAMPQPVPTA) are compositionally biased toward pro residues. Threonine 242 is modified (phosphothreonine).

It belongs to the universal ribosomal protein uS3 family. As to quaternary structure, component of the 40S small ribosomal subunit. Identified in a IGF2BP1-dependent mRNP granule complex containing untranslated mRNAs. Interacts with HNRPD. Interacts with PRMT1; the interaction methylates RPS3. Interacts with SUMO1; the interaction sumoylates RPS3. Interacts with UBC9. Interacts with CDK1; the interaction phosphorylates RPS3. Interacts with PRKCD; the interaction phosphorylates RPS3. Interacts with PKB/AKT; the interaction phosphorylates RPS3. Interacts with E2F1; the interaction occurs in the absence of nerve growth factor and increases transcription of pro-apoptotic proteins BCL2L11/BIM and HRK/Dp5. Interacts with the base excision repair proteins APEX1 and OGG1; interaction with OGG1 increases OGG1 N-glycosylase activity. Interacts with UNG; the interaction increases the uracil excision activity of UNG1. Interacts with HSP90; the interaction prevents the ubiquitination and proteasome-dependent degradation of RPS3 and is suppressed by increased ROS levels. Interacts with TOM70; the interaction promotes translocation of RPS3 to the mitochondrion. Interacts (via N-terminus) with RELA (via N-terminus); the interaction enhances the DNA-binding activity of the NF-kappa-B p65-p50 complex. Interacts with NFKBIA; the interaction is direct and may bridge the interaction between RPS3 and RELA. Interacts with IKKB; the interaction phosphorylates RPS3 and enhances its translocation to the nucleus. Interacts (via KH domain) with MDM2 and TP53. Interacts with TRADD. Interacts with CRY1. In terms of processing, methylation by PRMT1 is required for import into the nucleolus and for ribosome assembly. Sumoylation by SUMO1 enhances protein stability through increased resistance to proteolysis. Sumoylation occurs at one or more of the three consensus sites, Lys-18, Lys-214 and Lys-230. Post-translationally, phosphorylation at Thr-221 by CDK1 occurs mainly in G2/M phase. Phosphorylation by PRKCD occurs on a non-ribosomal-associated form which results in translocation of RPS3 to the nucleus and enhances its endonuclease activity. Phosphorylated on Ser-209 by IKKB in response to activation of the NF-kappa-B p65-p50 complex which enhances the association of RPS3 with importin-alpha and mediates the nuclear translocation of RPS3. Phosphorylation by MAPK is required for translocation to the nucleus following exposure of cells to DNA damaging agents such as hydrogen peroxide. Phosphorylation by PKB/AKT mediates RPS3 nuclear translocation, enhances RPS3 endonuclease activity and suppresses RPS3-induced neuronal apoptosis. In terms of processing, ubiquitinated; ubiquitination is prevented by interaction with HSP90 which stabilizes the protein. Monoubiquitinated at Lys-214 by RNF10 and ZNF598 when a ribosome has stalled during translation of poly(A) sequences, leading to preclude synthesis of a long poly-lysine tail and initiate the ribosome quality control (RQC) pathway to degrade the potentially detrimental aberrant nascent polypeptide. Deubiquitinated at Lys-214 by USP10, preventing degradation by the proteasome and promoting 40S ribosome subunit recycling following ribosome dissociation. Ufmylated by UFL1.

The protein localises to the cytoplasm. The protein resides in the nucleus. Its subcellular location is the nucleolus. It localises to the mitochondrion inner membrane. It is found in the cytoskeleton. The protein localises to the spindle. The catalysed reaction is 2'-deoxyribonucleotide-(2'-deoxyribose 5'-phosphate)-2'-deoxyribonucleotide-DNA = a 3'-end 2'-deoxyribonucleotide-(2,3-dehydro-2,3-deoxyribose 5'-phosphate)-DNA + a 5'-end 5'-phospho-2'-deoxyribonucleoside-DNA + H(+). In terms of biological role, component of the small ribosomal subunit. The ribosome is a large ribonucleoprotein complex responsible for the synthesis of proteins in the cell. Has endonuclease activity and plays a role in repair of damaged DNA. Cleaves phosphodiester bonds of DNAs containing altered bases with broad specificity and cleaves supercoiled DNA more efficiently than relaxed DNA. Displays high binding affinity for 7,8-dihydro-8-oxoguanine (8-oxoG), a common DNA lesion caused by reactive oxygen species (ROS). Has also been shown to bind with similar affinity to intact and damaged DNA. Stimulates the N-glycosylase activity of the base excision protein OGG1. Enhances the uracil excision activity of UNG1. Also stimulates the cleavage of the phosphodiester backbone by APEX1. When located in the mitochondrion, reduces cellular ROS levels and mitochondrial DNA damage. Has also been shown to negatively regulate DNA repair in cells exposed to hydrogen peroxide. Plays a role in regulating transcription as part of the NF-kappa-B p65-p50 complex where it binds to the RELA/p65 subunit, enhances binding of the complex to DNA and promotes transcription of target genes. Represses its own translation by binding to its cognate mRNA. Binds to and protects TP53/p53 from MDM2-mediated ubiquitination. Involved in spindle formation and chromosome movement during mitosis by regulating microtubule polymerization. Involved in induction of apoptosis through its role in activation of CASP8. Induces neuronal apoptosis by interacting with the E2F1 transcription factor and acting synergistically with it to up-regulate pro-apoptotic proteins BCL2L11/BIM and HRK/Dp5. Interacts with TRADD following exposure to UV radiation and induces apoptosis by caspase-dependent JNK activation. This is Small ribosomal subunit protein uS3 (RPS3) from Bos taurus (Bovine).